We begin with the raw amino-acid sequence, 262 residues long: Small ribosomal subunit protein eS4A (262 aa).

Residues 42–105 enclose the S4 RNA-binding domain; that stretch reads LPLIVFLRNR…GEHFRLVYDI (64 aa).

The protein belongs to the eukaryotic ribosomal protein eS4 family. In terms of assembly, component of the small ribosomal subunit (SSU). Mature yeast ribosomes consist of a small (40S) and a large (60S) subunit. The 40S small subunit contains 1 molecule of ribosomal RNA (18S rRNA) and at least 33 different proteins. The large 60S subunit contains 3 rRNA molecules (25S, 5.8S and 5S rRNA) and at least 46 different proteins.

It is found in the cytoplasm. Component of the ribosome, a large ribonucleoprotein complex responsible for the synthesis of proteins in the cell. The small ribosomal subunit (SSU) binds messenger RNAs (mRNAs) and translates the encoded message by selecting cognate aminoacyl-transfer RNA (tRNA) molecules. The large subunit (LSU) contains the ribosomal catalytic site termed the peptidyl transferase center (PTC), which catalyzes the formation of peptide bonds, thereby polymerizing the amino acids delivered by tRNAs into a polypeptide chain. The nascent polypeptides leave the ribosome through a tunnel in the LSU and interact with protein factors that function in enzymatic processing, targeting, and the membrane insertion of nascent chains at the exit of the ribosomal tunnel. This chain is Small ribosomal subunit protein eS4A (rps401), found in Schizosaccharomyces pombe (strain 972 / ATCC 24843) (Fission yeast).